A 520-amino-acid polypeptide reads, in one-letter code: 1,4-alpha-glucan branching enzyme TTHA1902 (520 aa).

The Nucleophile role is filled by Glu184. The substrate site is built by Arg265 and Gly282. Asp353 serves as the catalytic Proton donor. Residues Trp404, Asp460, and Gln469 each coordinate substrate.

It belongs to the glycosyl hydrolase 57 family.

The enzyme catalyses Transfers a segment of a (1-&gt;4)-alpha-D-glucan chain to a primary hydroxy group in a similar glucan chain.. It functions in the pathway glycan biosynthesis; glycogen biosynthesis. Catalyzes the formation of branch points in alpha-glucans by cleavage of an alpha-1,4 glycosidic bond and subsequent transfer of the cleaved-off oligosaccharide to a new alpha-1,6 position. The branch chain-length distribution of the reaction products shows degree of polymerization (DP) of 3 to 13, with two local maxima at DP 7 and DP 11. Exhibits an alpha-retaining catalytic mechanism. Is involved in glycogen biosynthesis. Shows a secondary activity, i.e. the hydrolysis of the substrate, being 4% of the total activity. Can use amylose as substrate but not alpha-1,4-linked oligosaccharides of 2-7 glucose residues, beta-cyclodextrin, 6-O-glucosyl-beta-cyclodextrin and 6-O-maltosyl-beta-cyclodextrin. Is not able to branch amylopectin further, it only hydrolyzes amylopectin. Thus, displays preference for linear and long substrates (amylose) over branched structures (amylopectin). This chain is 1,4-alpha-glucan branching enzyme TTHA1902, found in Thermus thermophilus (strain ATCC 27634 / DSM 579 / HB8).